Consider the following 255-residue polypeptide: BTB/POZ domain-containing protein KCTD14 (255 aa).

The disordered stretch occupies residues 1–29; that stretch reads MWQGCAVERPVGRMTSQTPLPQSPRPRRP. The BTB domain occupies 33 to 130; sequence TVVELNVGGE…LLEDMPQIFG (98 aa).

The sequence is that of BTB/POZ domain-containing protein KCTD14 (KCTD14) from Homo sapiens (Human).